Reading from the N-terminus, the 572-residue chain is Putative acyl-CoA synthetase CCNA_01223 (572 aa).

This sequence belongs to the ATP-dependent AMP-binding enzyme family.

The protein operates within lipid metabolism; sphingolipid metabolism. Its function is as follows. Involved in de novo bacterial ceramide synthesis. In Caulobacter vibrioides (strain NA1000 / CB15N) (Caulobacter crescentus), this protein is Putative acyl-CoA synthetase CCNA_01223.